Reading from the N-terminus, the 345-residue chain is Phosphoribosylformylglycinamidine cyclo-ligase (345 aa).

Belongs to the AIR synthase family.

The protein resides in the cytoplasm. The enzyme catalyses 2-formamido-N(1)-(5-O-phospho-beta-D-ribosyl)acetamidine + ATP = 5-amino-1-(5-phospho-beta-D-ribosyl)imidazole + ADP + phosphate + H(+). The protein operates within purine metabolism; IMP biosynthesis via de novo pathway; 5-amino-1-(5-phospho-D-ribosyl)imidazole from N(2)-formyl-N(1)-(5-phospho-D-ribosyl)glycinamide: step 2/2. In Escherichia coli O127:H6 (strain E2348/69 / EPEC), this protein is Phosphoribosylformylglycinamidine cyclo-ligase.